A 292-amino-acid polypeptide reads, in one-letter code: uncharacterized protein (292 aa).

This is an uncharacterized protein from Escherichia coli (strain K12).